Reading from the N-terminus, the 266-residue chain is Undecaprenyl-diphosphatase (266 aa).

The next 8 helical transmembrane spans lie at 1-21 (MDTFQVIILALIQGLTEFLPI), 39-59 (QGLSFDVAVNTGSLLAVVIYF), 87-107 (WWIILATLPAVFFGFMAKDFI), 111-131 (LRSAEVIAVTTIVFGLLLWWA), 149-169 (ALLIGFAQALALIPGTSRSGA), 183-203 (AAARFSFLMSVPVSLGAAILV), 218-238 (ALTLGTLVSFVAAYLCIHYFL), and 246-266 (MTPFVIYRLILGAVLCGFIFL).

The protein belongs to the UppP family.

The protein localises to the cell inner membrane. It catalyses the reaction di-trans,octa-cis-undecaprenyl diphosphate + H2O = di-trans,octa-cis-undecaprenyl phosphate + phosphate + H(+). Catalyzes the dephosphorylation of undecaprenyl diphosphate (UPP). Confers resistance to bacitracin. The sequence is that of Undecaprenyl-diphosphatase from Shewanella putrefaciens (strain CN-32 / ATCC BAA-453).